Consider the following 149-residue polypeptide: Secreted RxLR effector protein 3 (149 aa).

The signal sequence occupies residues 1-23; it reads MRASTILFVLGAAILAVIGVTTA. Positions 38–53 match the RxLR-dEER motif; sequence RLLRSGSMEQEPDEER.

The protein belongs to the RxLR effector family.

Its subcellular location is the secreted. The protein localises to the host nucleus. It localises to the host cytoplasm. In terms of biological role, secreted effector that completely suppresses the host cell death induced by cell death-inducing proteins. The chain is Secreted RxLR effector protein 3 from Plasmopara viticola (Downy mildew of grapevine).